Here is a 309-residue protein sequence, read N- to C-terminus: Ribonuclease Z (309 aa).

Residues H63, H65, D67, H68, H141, D212, and H270 each coordinate Zn(2+). The active-site Proton acceptor is D67.

This sequence belongs to the RNase Z family. In terms of assembly, homodimer. Zn(2+) is required as a cofactor.

It carries out the reaction Endonucleolytic cleavage of RNA, removing extra 3' nucleotides from tRNA precursor, generating 3' termini of tRNAs. A 3'-hydroxy group is left at the tRNA terminus and a 5'-phosphoryl group is left at the trailer molecule.. Zinc phosphodiesterase, which displays some tRNA 3'-processing endonuclease activity. Probably involved in tRNA maturation, by removing a 3'-trailer from precursor tRNA. This is Ribonuclease Z from Lactobacillus delbrueckii subsp. bulgaricus (strain ATCC 11842 / DSM 20081 / BCRC 10696 / JCM 1002 / NBRC 13953 / NCIMB 11778 / NCTC 12712 / WDCM 00102 / Lb 14).